A 1212-amino-acid polypeptide reads, in one-letter code: Myosin-1 (1212 aa).

The interval 1–35 (MGITRRGKDKAAAGQAVAGGASGGRARPKKATFET) is disordered. The region spanning 41 to 715 (VGVSDLTLLS…TLFALEHMRD (675 aa)) is the Myosin motor domain. ATP is bound at residue 134–141 (GESGAGKT). An actin-binding region spans residues 405 to 487 (SVGILDIYGF…PGVFSALKDA (83 aa)). IQ domains follow at residues 719-739 (HNMATRIQRMWRAYLAYRAES) and 740-765 (ATRIQTFWRKKRTGAEYLQLRDHGHR). The TH1 domain maps to 773–962 (RRRMSILGSR…AVHTQQGEPP (190 aa)). Disordered regions lie at residues 947-1064 (DFYK…APPA) and 1115-1212 (PAAY…DDDW). Over residues 954-966 (VHTQQGEPPNSVS) the composition is skewed to polar residues. Composition is skewed to low complexity over residues 987-998 (RPGGPNGRPARG) and 1008-1052 (PGGA…ASVR). Residues 1053-1062 (APPPPPPAAP) show a composition bias toward pro residues. Residues 1065–1124 (KAKIMAKVLYDFAGQKENEMSIKEGDLIEIVQKENNGWWLAKSGNQQAWVPAAYVEEQKQ) enclose the SH3 domain. The span at 1125–1140 (APPPVAASRPPPPAPP) shows a compositional bias: pro residues. Residues 1171–1190 (MSLNGSDGSRSNTPTPSLGN) are compositionally biased toward polar residues.

This sequence belongs to the TRAFAC class myosin-kinesin ATPase superfamily. Myosin family.

The protein localises to the cytoplasm. Its subcellular location is the cytoskeleton. It localises to the actin patch. In terms of biological role, type-I myosin implicated in the organization of the actin cytoskeleton. Required for proper actin cytoskeleton polarization. At the cell cortex, assembles in patch-like structures together with proteins from the actin-polymerizing machinery and promotes actin assembly. Functions as actin nucleation-promoting factor (NPF) for the Arp2/3 complex. The chain is Myosin-1 (MYO1) from Pyricularia oryzae (strain 70-15 / ATCC MYA-4617 / FGSC 8958) (Rice blast fungus).